The primary structure comprises 310 residues: MKKNGLLLVNLGSPDTPTTPDVKRYLKEFLSDRNVIEMPPALWQPLLRGIILPTRSWRSATFYRNCWTKDGSPLIVYTERLVAKVQGLMPEWVVKMAMTYGKPKISDTITGMKKECQNITVLPLFPFFTKSTTQTVIDKVKDADPEAKIIDRFSAEEDYLDLLAKQIQTAWDRGKYDKLLISYHGIPTAMVNHGDPYRDETEAATAELIKRLDIPEKQIKMAYQSKFGPMPWLKPYLRNTLLNEAQLGHRDVLVVAPSFVADCLETLEEDQVQNYQVFRENGGNNLVMVPSLNDSPEFAQFITDLVQRKG.

Fe(2+)-binding residues include His184 and Glu265.

This sequence belongs to the ferrochelatase family.

The protein localises to the cytoplasm. It catalyses the reaction Fe-coproporphyrin III + 2 H(+) = coproporphyrin III + Fe(2+). It functions in the pathway porphyrin-containing compound metabolism; protoheme biosynthesis. Involved in coproporphyrin-dependent heme b biosynthesis. Catalyzes the insertion of ferrous iron into coproporphyrin III to form Fe-coproporphyrin III. The chain is Coproporphyrin III ferrochelatase from Limosilactobacillus reuteri (strain DSM 20016) (Lactobacillus reuteri).